The following is a 185-amino-acid chain: MIAEIKKSAEQKMQKSLEALKLDLGKIRTGRAHTGLLDHVTVDYYGNPTAINQVANISLADARTITVAPWEKKMLGAIEKAIRNSDLGLNPTTVGELIRVPMPPLTEERRRDLTKVVKHEGEAARVAMRNIRRDANAHLKDLLKEKKIAEDEERKGQEDIQKLTDRYIADIDKLLQAKEAELMAV.

The protein belongs to the RRF family.

It localises to the cytoplasm. Functionally, responsible for the release of ribosomes from messenger RNA at the termination of protein biosynthesis. May increase the efficiency of translation by recycling ribosomes from one round of translation to another. This is Ribosome-recycling factor from Nitrosospira multiformis (strain ATCC 25196 / NCIMB 11849 / C 71).